Here is an 875-residue protein sequence, read N- to C-terminus: Leucine--tRNA ligase (875 aa).

The segment covering M1–T20 has biased composition (polar residues). The disordered stretch occupies residues M1–R22. A 'HIGH' region motif is present at residues P60 to H70. The short motif at K634–S638 is the 'KMSKS' region element. Position 637 (K637) interacts with ATP.

Belongs to the class-I aminoacyl-tRNA synthetase family.

The protein resides in the cytoplasm. The enzyme catalyses tRNA(Leu) + L-leucine + ATP = L-leucyl-tRNA(Leu) + AMP + diphosphate. The chain is Leucine--tRNA ligase from Synechococcus sp. (strain CC9605).